The following is a 452-amino-acid chain: Exodeoxyribonuclease 7 large subunit (452 aa).

Belongs to the XseA family. In terms of assembly, heterooligomer composed of large and small subunits.

The protein resides in the cytoplasm. The enzyme catalyses Exonucleolytic cleavage in either 5'- to 3'- or 3'- to 5'-direction to yield nucleoside 5'-phosphates.. In terms of biological role, bidirectionally degrades single-stranded DNA into large acid-insoluble oligonucleotides, which are then degraded further into small acid-soluble oligonucleotides. In Bacillus cereus (strain G9842), this protein is Exodeoxyribonuclease 7 large subunit.